Consider the following 154-residue polypeptide: Lipoprotein signal peptidase (154 aa).

2 consecutive transmembrane segments (helical) span residues 57–77 (LVLSAVTLLVLSAIIVYMIKY) and 86–103 (ISLSLVISGALGNLYDRV). Residues aspartate 110 and aspartate 129 contribute to the active site. Residues 124–144 (VFNVADICVVVGTIMIAIFIV) form a helical membrane-spanning segment.

The protein belongs to the peptidase A8 family.

The protein resides in the cell membrane. It carries out the reaction Release of signal peptides from bacterial membrane prolipoproteins. Hydrolyzes -Xaa-Yaa-Zaa-|-(S,diacylglyceryl)Cys-, in which Xaa is hydrophobic (preferably Leu), and Yaa (Ala or Ser) and Zaa (Gly or Ala) have small, neutral side chains.. The protein operates within protein modification; lipoprotein biosynthesis (signal peptide cleavage). In terms of biological role, this protein specifically catalyzes the removal of signal peptides from prolipoproteins. This Clostridium acetobutylicum (strain ATCC 824 / DSM 792 / JCM 1419 / IAM 19013 / LMG 5710 / NBRC 13948 / NRRL B-527 / VKM B-1787 / 2291 / W) protein is Lipoprotein signal peptidase.